The sequence spans 185 residues: Elongation factor P (185 aa).

Belongs to the elongation factor P family.

Its subcellular location is the cytoplasm. It functions in the pathway protein biosynthesis; polypeptide chain elongation. Its function is as follows. Involved in peptide bond synthesis. Stimulates efficient translation and peptide-bond synthesis on native or reconstituted 70S ribosomes in vitro. Probably functions indirectly by altering the affinity of the ribosome for aminoacyl-tRNA, thus increasing their reactivity as acceptors for peptidyl transferase. The polypeptide is Elongation factor P (Desulfovibrio desulfuricans (strain ATCC 27774 / DSM 6949 / MB)).